The following is a 402-amino-acid chain: 1-deoxy-D-xylulose 5-phosphate reductoisomerase (402 aa).

Residues T10, G11, S12, I13, G36, N38, and N124 each coordinate NADPH. K125 contributes to the 1-deoxy-D-xylulose 5-phosphate binding site. E126 lines the NADPH pocket. D150 lines the Mn(2+) pocket. Residues S151, E152, S186, and H209 each contribute to the 1-deoxy-D-xylulose 5-phosphate site. Position 152 (E152) interacts with Mn(2+). G215 contacts NADPH. Positions 222, 227, 228, and 231 each coordinate 1-deoxy-D-xylulose 5-phosphate. E231 provides a ligand contact to Mn(2+).

It belongs to the DXR family. Mg(2+) serves as cofactor. Requires Mn(2+) as cofactor.

The enzyme catalyses 2-C-methyl-D-erythritol 4-phosphate + NADP(+) = 1-deoxy-D-xylulose 5-phosphate + NADPH + H(+). The protein operates within isoprenoid biosynthesis; isopentenyl diphosphate biosynthesis via DXP pathway; isopentenyl diphosphate from 1-deoxy-D-xylulose 5-phosphate: step 1/6. Catalyzes the NADPH-dependent rearrangement and reduction of 1-deoxy-D-xylulose-5-phosphate (DXP) to 2-C-methyl-D-erythritol 4-phosphate (MEP). This Vibrio cholerae serotype O1 (strain ATCC 39541 / Classical Ogawa 395 / O395) protein is 1-deoxy-D-xylulose 5-phosphate reductoisomerase.